The sequence spans 493 residues: Glutamyl-tRNA(Gln) amidotransferase subunit A (493 aa).

Active-site charge relay system residues include K78 and S158. The active-site Acyl-ester intermediate is S182.

The protein belongs to the amidase family. GatA subfamily. In terms of assembly, heterotrimer of A, B and C subunits.

The catalysed reaction is L-glutamyl-tRNA(Gln) + L-glutamine + ATP + H2O = L-glutaminyl-tRNA(Gln) + L-glutamate + ADP + phosphate + H(+). Allows the formation of correctly charged Gln-tRNA(Gln) through the transamidation of misacylated Glu-tRNA(Gln) in organisms which lack glutaminyl-tRNA synthetase. The reaction takes place in the presence of glutamine and ATP through an activated gamma-phospho-Glu-tRNA(Gln). This Rickettsia conorii (strain ATCC VR-613 / Malish 7) protein is Glutamyl-tRNA(Gln) amidotransferase subunit A.